Consider the following 333-residue polypeptide: MLFSMESILSSTKPKLEPPPKLEPEVTINEQVVDLPRSNTRLSEPSTSASVLEHDLKFGESRKRSRSLGDEPTEDEDGVPVRKANKRNHSTSSAADSSSDDAKDDDDDDDSTSRKSMSGHRKSSHAKPPYSYIALIAMSILNSPEKKLTLSEICEFIINKFEYYKEKFPAWQNSIRHNLSLNDCFVKVARGPGNPGKGNYWALDPNCEDMFDNGSFLRRRKRYKKNSDTYHEMMSHHPMPFPPFLPQGMPFPPRMMHPMANIPMLGHPMNPRAVPNMPAFFIPQNIDSQKLLSMMASRIMPMDAPVSSGQKRTSSSSSPNENGSSAVSDKLSA.

The interval 1–126 is disordered; it reads MLFSMESILS…MSGHRKSSHA (126 aa). Basic and acidic residues predominate over residues 14–24; it reads PKLEPPPKLEP. A compositionally biased stretch (polar residues) spans 37–50; that stretch reads RSNTRLSEPSTSAS. Positions 52–62 are enriched in basic and acidic residues; the sequence is LEHDLKFGESR. The segment covering 98–110 has biased composition (acidic residues); the sequence is SSDDAKDDDDDDD. The segment at residues 127–221 is a DNA-binding region (fork-head); the sequence is KPPYSYIALI…DNGSFLRRRK (95 aa). The interval 304–333 is disordered; that stretch reads APVSSGQKRTSSSSSPNENGSSAVSDKLSA. The span at 307 to 333 shows a compositional bias: low complexity; sequence SSGQKRTSSSSSPNENGSSAVSDKLSA.

In terms of tissue distribution, expressed in ventral body wall muscle. Expressed in the structural cells and two neurons of each ray in the male tail.

The protein resides in the nucleus. In terms of biological role, probable transcription factor. Binds to DNA sequence motif 5'-CTGTTTCA-3'. Required for the migration of distal tip cells (DTC) and axonal growth-cones along the dorsal-ventral axis of the body wall, acting by cell autonomous repression of unc-129/TGF-beta expression in ventral body muscle during embyogenesis. Binds to the promoter region of the unc-129 gene. Plays a role in dorsal-ventral patterning and fate specification of the postembryonic mesoderm. Involved in male tail morphogenesis and in embryogenesis. Plays a role in the development of sensory neurons and is required to repress AWA fate and promote ASG fate in the ASG chemosensory neurons. Regulates expression of a class of small RNAs, known as 21U-RNAs. This is Forkhead box protein unc-130 from Caenorhabditis elegans.